Consider the following 311-residue polypeptide: 2-dehydro-3-deoxygluconokinase (311 aa).

Substrate-binding positions include 34–35, 106–108, and arginine 166; these read GS and YYR. ATP contacts are provided by residues 164–166, 224–229, 253–256, and serine 283; these read NIR, KLGPKG, and GAGD. Substrate is bound by residues glycine 253 and aspartate 256. The Proton acceptor role is filled by aspartate 256. Aspartate 292 is a binding site for substrate.

Belongs to the carbohydrate kinase PfkB family. In terms of assembly, homotetramer. Requires a divalent metal cation as cofactor.

It catalyses the reaction 2-dehydro-3-deoxy-D-gluconate + ATP = 2-dehydro-3-deoxy-6-phospho-D-gluconate + ADP + H(+). It participates in carbohydrate acid metabolism; 2-dehydro-3-deoxy-D-gluconate degradation; D-glyceraldehyde 3-phosphate and pyruvate from 2-dehydro-3-deoxy-D-gluconate: step 1/2. Involved in the degradation of glucose via the semi-phosphorylative Entner-Doudoroff pathway. Catalyzes the phosphorylation of 2-keto-3-deoxygluconate (KDG) to produce 2-keto-3-deoxy-6-phosphogluconate (KDPG). Can also use GTP, but not ADP or AMP, as a phosphoryl donor and 2-keto-D-gluconate (KG) as a phosphoryl acceptor. In Sulfurisphaera tokodaii (strain DSM 16993 / JCM 10545 / NBRC 100140 / 7) (Sulfolobus tokodaii), this protein is 2-dehydro-3-deoxygluconokinase.